Reading from the N-terminus, the 115-residue chain is Sericin-1 (115 aa).

Positions 1–115 (GSSGSSGSSG…GGSSSTSSSN (115 aa)) are disordered.

In terms of tissue distribution, produced exclusively in the middle (MSG) section of silk glands.

Its subcellular location is the secreted. Functionally, provides the silk fibroin thread with a sticky coating. Acts as a cement by sticking silk threads together. The protein is Sericin-1 (SER1) of Galleria mellonella (Greater wax moth).